The primary structure comprises 439 residues: GTPase Der (439 aa).

EngA-type G domains lie at Pro4 to Glu168 and Ile177 to Thr352. GTP contacts are provided by residues Gly10–Ser17, Asp57–Ile61, Asn120–Asp123, Gly183–Ser190, Asp230–Leu234, and Asn295–Asp298. The KH-like domain maps to Lys353–Lys437.

Belongs to the TRAFAC class TrmE-Era-EngA-EngB-Septin-like GTPase superfamily. EngA (Der) GTPase family. Associates with the 50S ribosomal subunit.

GTPase that plays an essential role in the late steps of ribosome biogenesis. The sequence is that of GTPase Der from Clostridium botulinum (strain Kyoto / Type A2).